Here is a 229-residue protein sequence, read N- to C-terminus: MSLLAQLDQKIAANGGLIVSCQPVPDSPLDKPDIVAAMALAAEQAGAVAIRIEGVANLQATRAVVSVPIIGIVKRDLEDSPVRITAYIEDVDALAQAGADIIAIDGTDRPRPVPVETLLARIHHHGLLAMTDCSTPEDGLACQKLGAEIIGTTLSGYTTPETPEEPDLTLVKRLSDAGCRVIAEGRYNTPAQAADAMRHGAWAVTVGSAITRLEHICQWYNTAMKKAVL.

The protein belongs to the NanE family.

The catalysed reaction is an N-acyl-D-glucosamine 6-phosphate = an N-acyl-D-mannosamine 6-phosphate. Its pathway is amino-sugar metabolism; N-acetylneuraminate degradation; D-fructose 6-phosphate from N-acetylneuraminate: step 3/5. Functionally, converts N-acetylmannosamine-6-phosphate (ManNAc-6-P) to N-acetylglucosamine-6-phosphate (GlcNAc-6-P). This chain is Putative N-acetylmannosamine-6-phosphate 2-epimerase, found in Shigella dysenteriae serotype 1 (strain Sd197).